Consider the following 23-residue polypeptide: Acidic phospholipase A2 CHA-E6b (23 aa).

Belongs to the phospholipase A2 family. Group II subfamily. D49 sub-subfamily. The cofactor is Ca(2+). Post-translationally, contains 7 disulfide bonds. Expressed by the venom gland.

Its subcellular location is the secreted. It carries out the reaction a 1,2-diacyl-sn-glycero-3-phosphocholine + H2O = a 1-acyl-sn-glycero-3-phosphocholine + a fatty acid + H(+). Its function is as follows. Snake venom phospholipase A2 (PLA2) that shows high lipolytic (1200 umol/mg/min) and weak ADP-induced platelet aggregation activities. Also shows weak anticoagulant activity (IC(50) of about 1.0 uM). PLA2 catalyzes the calcium-dependent hydrolysis of the 2-acyl groups in 3-sn-phosphoglycerides. The protein is Acidic phospholipase A2 CHA-E6b of Crotalus horridus (Timber rattlesnake).